Consider the following 569-residue polypeptide: Endonuclease/exonuclease/phosphatase family domain-containing protein 1 (569 aa).

The tract at residues 1 to 20 (MGSTLGCHRSIPRDPSDLSH) is disordered. A lipid anchor (N-myristoyl glycine) is attached at Gly-2. Over residues 11–20 (IPRDPSDLSH) the composition is skewed to basic and acidic residues. Phosphoserine is present on residues Ser-16, Ser-21, and Ser-25. Residues 38 to 67 (ERLNINTATEEELMTLPGVTRAVARSIVEY) enclose the HhH domain. 4 positions are modified to phosphoserine: Ser-106, Ser-110, Ser-160, and Ser-173. The tract at residues 200–225 (SRPPSTHTNGGLTFTAKPHPSPTSLS) is disordered. Residues 202 to 211 (PPSTHTNGGL) are compositionally biased toward polar residues. Thr-265 is subject to Phosphothreonine. Phosphoserine is present on Ser-428. The disordered stretch occupies residues 545 to 569 (SKKDAPRNGSGVALERSEANIKHER). A compositionally biased stretch (basic and acidic residues) spans 559 to 569 (ERSEANIKHER).

This Homo sapiens (Human) protein is Endonuclease/exonuclease/phosphatase family domain-containing protein 1 (EEPD1).